The chain runs to 226 residues: Peroxynitrite isomerase 2 (226 aa).

A GXWXGXG motif is present at residues 73 to 79 (GVWRGEG). Positions 189 and 216 each coordinate heme b.

Belongs to the nitrobindin family. As to quaternary structure, homodimer. Requires heme b as cofactor.

The enzyme catalyses peroxynitrite = nitrate. Its pathway is nitrogen metabolism. In terms of biological role, heme-binding protein able to scavenge peroxynitrite and to protect free L-tyrosine against peroxynitrite-mediated nitration, by acting as a peroxynitrite isomerase that converts peroxynitrite to nitrate. Therefore, this protein likely plays a role in peroxynitrite sensing and in the detoxification of reactive nitrogen and oxygen species (RNS and ROS, respectively). Is able to bind nitric oxide (NO) in vitro, but may act as a sensor of peroxynitrite levels in vivo. The polypeptide is Peroxynitrite isomerase 2 (Mycobacterium bovis (strain ATCC BAA-935 / AF2122/97)).